A 207-amino-acid chain; its full sequence is MPKVALYNQSGETIGEIELNDSVFGIEPNKHVLFEAVIMQRASLRQGTHKTKNRAEVSGGGRKPWRQKGTGRARQGSIRAPQWRGGGTVFGPVPRSYSYKLPKKVRRLAIKSALSSKVLENNIVVLDNLTLEAPKTKEMVKILNNLSVDRKALIVTDDVNENVTLSARNIPGVTVVTANGINVLDVLNHDKLVITKAAVEKVEEVLA.

The interval 45-78 (RQGTHKTKNRAEVSGGGRKPWRQKGTGRARQGSI) is disordered.

Belongs to the universal ribosomal protein uL4 family. As to quaternary structure, part of the 50S ribosomal subunit.

Its function is as follows. One of the primary rRNA binding proteins, this protein initially binds near the 5'-end of the 23S rRNA. It is important during the early stages of 50S assembly. It makes multiple contacts with different domains of the 23S rRNA in the assembled 50S subunit and ribosome. Functionally, forms part of the polypeptide exit tunnel. This Geobacillus sp. (strain WCH70) protein is Large ribosomal subunit protein uL4.